Here is a 283-residue protein sequence, read N- to C-terminus: Bifunctional protein FolD (283 aa).

NADP(+)-binding positions include 165–167 (GRS) and Ser190.

Belongs to the tetrahydrofolate dehydrogenase/cyclohydrolase family. In terms of assembly, homodimer.

The catalysed reaction is (6R)-5,10-methylene-5,6,7,8-tetrahydrofolate + NADP(+) = (6R)-5,10-methenyltetrahydrofolate + NADPH. It carries out the reaction (6R)-5,10-methenyltetrahydrofolate + H2O = (6R)-10-formyltetrahydrofolate + H(+). It participates in one-carbon metabolism; tetrahydrofolate interconversion. Catalyzes the oxidation of 5,10-methylenetetrahydrofolate to 5,10-methenyltetrahydrofolate and then the hydrolysis of 5,10-methenyltetrahydrofolate to 10-formyltetrahydrofolate. The protein is Bifunctional protein FolD of Variovorax paradoxus (strain S110).